We begin with the raw amino-acid sequence, 508 residues long: Photosystem II CP47 reaction center protein (508 aa).

6 consecutive transmembrane segments (helical) span residues 21–36 (AVHIMHTALVSGWAGS), 101–115 (IVFSGLCFLAAIWHW), 140–156 (GIHLFLSGAACFGFGAF), 203–218 (IAAGILGILAGLFHLS), 237–252 (VLSSSIAAVFFAAFIV), and 457–472 (TFALLFFFGHIWHGAR).

It belongs to the PsbB/PsbC family. PsbB subfamily. In terms of assembly, PSII is composed of 1 copy each of membrane proteins PsbA, PsbB, PsbC, PsbD, PsbE, PsbF, PsbH, PsbI, PsbJ, PsbK, PsbL, PsbM, PsbT, PsbX, PsbY, PsbZ, Psb30/Ycf12, at least 3 peripheral proteins of the oxygen-evolving complex and a large number of cofactors. It forms dimeric complexes. It depends on Binds multiple chlorophylls. PSII binds additional chlorophylls, carotenoids and specific lipids. as a cofactor.

Its subcellular location is the plastid. The protein resides in the chloroplast thylakoid membrane. Its function is as follows. One of the components of the core complex of photosystem II (PSII). It binds chlorophyll and helps catalyze the primary light-induced photochemical processes of PSII. PSII is a light-driven water:plastoquinone oxidoreductase, using light energy to abstract electrons from H(2)O, generating O(2) and a proton gradient subsequently used for ATP formation. The polypeptide is Photosystem II CP47 reaction center protein (Cryptomeria japonica (Japanese cedar)).